The sequence spans 2058 residues: Protein Daple (2058 aa).

The Calponin-homology (CH) domain occupies 11–131 (HFLESPLVTW…KILLLMLGCA (121 aa)). Coiled coils occupy residues 195–221 (HLKR…DYLQ), 247–428 (EDKK…SMNE), 455–1016 (ELNE…LRGA), 1043–1082 (ELLK…NLNL), and 1108–1388 (ANLQ…KFYD). Disordered regions lie at residues 1406–1444 (LIKP…MRPL), 1480–1592 (HRMS…EDMI), 1617–1655 (TKNR…PGSE), 1696–1724 (LHPS…LPSA), 1831–1857 (YSAT…RGNS), 1940–1959 (LALP…ASSL), and 1988–2051 (PVRP…PQTV). The segment covering 1409 to 1418 (PKKEPSRESV) has biased composition (basic and acidic residues). Over residues 1419 to 1429 (KSPTDVQSKTM) the composition is skewed to polar residues. Positions 1494 to 1506 (GPEHLSRSRRMES) are enriched in basic and acidic residues. A compositionally biased stretch (polar residues) spans 1552–1577 (NAGSSRVPWTSSLEVSRSASNSSSPL). Short sequence motifs (GBA) lie at residues 1653–1675 (GSEM…PSRR) and 1676–1697 (HSLN…ETLH). Residues 1831–1841 (YSATSSSQSPE) show a composition bias toward polar residues. Over residues 2039–2048 (PASPDPSADP) the composition is skewed to low complexity. Residues 2055–2058 (YGCV) carry the PDZ-binding motif.

This sequence belongs to the CCDC88 family. In terms of assembly, interacts with dvl2/dsh via the PDZ-binding motif. As to expression, expressed weakly in gastrulae, with slightly stronger expression in the dorsal region. In neurulae, expressed in the neural plate with strong expression in the presumptive mesencephalic region. At the tailbud stage, expressed in somatic cells and in part of the tail. Also strongly expressed in regions of the head including eye vesicles, otic vesicles, olfactory placode and the pharyngeal cavity.

It localises to the cytoplasm. It is found in the cell junction. In terms of biological role, positive regulator of Wnt signaling, acting synergistically with dvl2/dsh. Functions upstream of ctnnb1/beta-catenin in the canonical Wnt pathway, and also activates jnk in the Wnt/planar cell polarity (PCP) pathway. Acts as a non-receptor guanine nucleotide exchange factor which binds to and activates guanine nucleotide-binding protein G(i) alpha subunits. This promotes apical cell constriction and subsequent bending of the neural plate during neurulation via arhgef18. The protein is Protein Daple (ccdc88c) of Xenopus laevis (African clawed frog).